The chain runs to 360 residues: Membrane-bound lytic murein transglycosylase C (360 aa).

The N-terminal stretch at 1-16 (MKKYLALALIAPLLVS) is a signal peptide. Cys-17 carries N-palmitoyl cysteine lipidation. Cys-17 carries the S-diacylglycerol cysteine lipid modification.

This sequence belongs to the transglycosylase Slt family.

Its subcellular location is the cell outer membrane. The enzyme catalyses Exolytic cleavage of the (1-&gt;4)-beta-glycosidic linkage between N-acetylmuramic acid (MurNAc) and N-acetylglucosamine (GlcNAc) residues in peptidoglycan, from either the reducing or the non-reducing ends of the peptidoglycan chains, with concomitant formation of a 1,6-anhydrobond in the MurNAc residue.. Its function is as follows. Murein-degrading enzyme. May play a role in recycling of muropeptides during cell elongation and/or cell division. This chain is Membrane-bound lytic murein transglycosylase C, found in Klebsiella pneumoniae subsp. pneumoniae (strain ATCC 700721 / MGH 78578).